The primary structure comprises 341 residues: tRNA N6-adenosine threonylcarbamoyltransferase (341 aa).

2 residues coordinate Fe cation: His-111 and His-115. Substrate contacts are provided by residues 134-138 (LVSGG), Asp-167, Gly-180, and Asn-277. Asp-305 lines the Fe cation pocket.

The protein belongs to the KAE1 / TsaD family. It depends on Fe(2+) as a cofactor.

It localises to the cytoplasm. It catalyses the reaction L-threonylcarbamoyladenylate + adenosine(37) in tRNA = N(6)-L-threonylcarbamoyladenosine(37) in tRNA + AMP + H(+). Functionally, required for the formation of a threonylcarbamoyl group on adenosine at position 37 (t(6)A37) in tRNAs that read codons beginning with adenine. Is involved in the transfer of the threonylcarbamoyl moiety of threonylcarbamoyl-AMP (TC-AMP) to the N6 group of A37, together with TsaE and TsaB. TsaD likely plays a direct catalytic role in this reaction. The chain is tRNA N6-adenosine threonylcarbamoyltransferase from Chromobacterium violaceum (strain ATCC 12472 / DSM 30191 / JCM 1249 / CCUG 213 / NBRC 12614 / NCIMB 9131 / NCTC 9757 / MK).